Here is a 332-residue protein sequence, read N- to C-terminus: Ferredoxin--NADP reductase 2 (332 aa).

FAD contacts are provided by D33, Q41, Y46, V86, I121, D282, and S325.

It belongs to the ferredoxin--NADP reductase type 2 family. As to quaternary structure, homodimer. FAD is required as a cofactor.

It carries out the reaction 2 reduced [2Fe-2S]-[ferredoxin] + NADP(+) + H(+) = 2 oxidized [2Fe-2S]-[ferredoxin] + NADPH. The protein is Ferredoxin--NADP reductase 2 of Sulfolobus acidocaldarius (strain ATCC 33909 / DSM 639 / JCM 8929 / NBRC 15157 / NCIMB 11770).